An 85-amino-acid polypeptide reads, in one-letter code: MSAKNNIQDQLLNTARKDKLDLTIYLLNGVPLKGKVVSFDNFTIVLEQENKQSLVYKHAISTIIPAKIIKLYTEEAKDNKDAAQG.

The 61-residue stretch at 9–69 folds into the Sm domain; that stretch reads DQLLNTARKD…ISTIIPAKII (61 aa).

Belongs to the Hfq family. As to quaternary structure, homohexamer.

Functionally, RNA chaperone that binds small regulatory RNA (sRNAs) and mRNAs to facilitate mRNA translational regulation in response to envelope stress, environmental stress and changes in metabolite concentrations. Also binds with high specificity to tRNAs. The protein is RNA-binding protein Hfq of Leptospira interrogans serogroup Icterohaemorrhagiae serovar copenhageni (strain Fiocruz L1-130).